Consider the following 450-residue polypeptide: MAHISFDSSNLTKFVHNNELGEMQAMVTAADKELREGTGAGNDFRGWLNLPTDYDKEEFARIKTAAKKIQDDSDVLVVIGIGGSYLGARAAIEFLHETFWSSLSREDRKFPQVVFAGNSISSSYVNDLIHLIGDRDFSVNIISKSGTTTEPSIAFRVFKERLIAKYGEEAAKGRIYATTDRKRGALKQEADAEGYETFVIPDDVGGRFTVLTPVGLLPIAVSGGDIDSLMKGAADAQNEYKDADLSKNEAYQYAAYRNILYRKGYTTEILENYEPNMAMFSEWWKQLMGESEGKDQKGIYPSSANFTTDLHSLGQYIQEGRRNLMETVVKVDNATSDVDIPKETENLDGLKYLEGKTMAQVNTKAFEGVIMAHVDGGVPNMVVNIPSQDAYTLGYTMYFFEAAVAISGYLNGINPFNQPGVEAYKNNMFALLGKPGYEELTKKLTARLSD.

The active-site Proton donor is Glu290. Catalysis depends on residues His311 and Lys425.

Belongs to the GPI family.

Its subcellular location is the cytoplasm. It carries out the reaction alpha-D-glucose 6-phosphate = beta-D-fructose 6-phosphate. The protein operates within carbohydrate biosynthesis; gluconeogenesis. Its pathway is carbohydrate degradation; glycolysis; D-glyceraldehyde 3-phosphate and glycerone phosphate from D-glucose: step 2/4. Catalyzes the reversible isomerization of glucose-6-phosphate to fructose-6-phosphate. This is Glucose-6-phosphate isomerase from Lactiplantibacillus plantarum (strain ATCC BAA-793 / NCIMB 8826 / WCFS1) (Lactobacillus plantarum).